The primary structure comprises 797 residues: Calcium-transporting ATPase CtpE (797 aa).

3 consecutive transmembrane segments (helical) span residues Leu55 to Ile75, Ile215 to Leu235, and Val254 to Val274. Asp301 functions as the 4-aspartylphosphate intermediate in the catalytic mechanism. Residues Asp301, Thr303, and Asp536 each coordinate Mg(2+). A run of 6 helical transmembrane segments spans residues Thr601–Leu621, Ile633–Ala653, Val667–Leu687, Ala703–Ala723, Trp729–Leu749, and Thr764–Ile784.

Belongs to the cation transport ATPase (P-type) (TC 3.A.3) family.

It localises to the cell membrane. It carries out the reaction Ca(2+)(in) + ATP + H2O = Ca(2+)(out) + ADP + phosphate + H(+). P-type ATPase involved in specific uptake of calcium. This is Calcium-transporting ATPase CtpE (ctpE) from Mycobacterium bovis (strain ATCC BAA-935 / AF2122/97).